The primary structure comprises 73 residues: LQMLHAWTNSALVHYAAPDWRETGGRLLGEGALRELRDGRRAASSSWPGRGSSRRWRPGRRTGAAARGCWRAP.

The interval 39–73 is disordered; it reads GRRAASSSWPGRGSSRRWRPGRRTGAAARGCWRAP. Composition is skewed to low complexity over residues 42–51 and 61–73; these read AASSSWPGRG and RTGA…WRAP.

The protein belongs to the peptidase M1 family. Zn(2+) is required as a cofactor.

Its subcellular location is the cytoplasm. In terms of biological role, hydrolyzes preferentially the N-terminal glycine and can also hydrolyze other amino acids which are used by PepN but is unable to hydrolyze basic amino acids. In Streptomyces lividans, this protein is Aminopeptidase G (pepG).